We begin with the raw amino-acid sequence, 356 residues long: Solute carrier family 25 member 3 (356 aa).

The N-terminal 44 residues, 1-44 (MFSSVAHLARANPFNAPHLQLVHDVSGPRSPPGPPRRSRHLAAA), are a transit peptide targeting the mitochondrion. At 45 to 57 (AVEGYSCEFGSMK) the chain is on the mitochondrial intermembrane side. Solcar repeat units follow at residues 57–141 (KYYA…FKAL), 154–238 (WRTS…TVEA), and 255–333 (EQLV…VKVY). The helical transmembrane segment at 58–80 (YYALCGFGGVLSCGLTHTAVVPL) threads the bilayer. Topologically, residues 81–115 (DLVKCRMQVDPQKYKGIFNGFSITLKEDGVRGLAK) are mitochondrial matrix. N6-acetyllysine is present on K93. K106 is modified (N6-methyllysine). A helical membrane pass occupies residues 116–135 (GWAPTLIGYSMQGLCKFGFY). The Mitochondrial intermembrane segment spans residues 136–155 (EVFKALYSNILGEENTYLWR). Residues 156–177 (TSLYLAASASAEFFADIALAPM) traverse the membrane as a helical segment. Topologically, residues 178–212 (EAAKVRIQTQPGYANTLREAVPKMYKEEGLNAFYK) are mitochondrial matrix. Residue Y190 is modified to Phosphotyrosine. Position 203 is an N6-acetyllysine (K203). The helical transmembrane segment at 213–232 (GVAPVWMRQIPYTMMKFACF) threads the bilayer. Residues 233–255 (ERTVEALYKFVVPKPRSECTKAE) are Mitochondrial intermembrane-facing. A helical membrane pass occupies residues 256–278 (QLVVTFVAGYIAGVFCAIVSHPA). Over 279-308 (DSVVSVLNKEKGSTASQVLQRLGFRGVWKG) the chain is Mitochondrial matrix. The helical transmembrane segment at 309–327 (LFARIIMIGTLTALQWFIY) threads the bilayer. Topologically, residues 328-356 (DSVKVYFRLPRPPPPEMPESLKKKLGLTE) are mitochondrial intermembrane.

The protein belongs to the mitochondrial carrier (TC 2.A.29) family. Interacts with PPIF; the interaction is impaired by CsA.

It is found in the mitochondrion inner membrane. The enzyme catalyses phosphate(in) + H(+)(in) = phosphate(out) + H(+)(out). Functionally, inorganic ion transporter that transports phosphate or copper ions across the mitochondrial inner membrane into the matrix compartment. Mediates proton-coupled symport of phosphate ions necessary for mitochondrial oxidative phosphorylation of ADP to ATP. Transports copper ions probably in the form of anionic copper(I) complexes to maintain mitochondrial matrix copper pool and to supply copper for cytochrome C oxidase complex assembly. May also play a role in regulation of the mitochondrial permeability transition pore (mPTP). This is Solute carrier family 25 member 3 from Rattus norvegicus (Rat).